A 244-amino-acid polypeptide reads, in one-letter code: Phosphoadenosine 5'-phosphosulfate reductase (244 aa).

The active-site Nucleophile; cysteine thiosulfonate intermediate is the Cys239.

The protein belongs to the PAPS reductase family. CysH subfamily.

The protein resides in the cytoplasm. It catalyses the reaction [thioredoxin]-disulfide + sulfite + adenosine 3',5'-bisphosphate + 2 H(+) = [thioredoxin]-dithiol + 3'-phosphoadenylyl sulfate. The protein operates within sulfur metabolism; hydrogen sulfide biosynthesis; sulfite from sulfate: step 3/3. Its function is as follows. Catalyzes the formation of sulfite from phosphoadenosine 5'-phosphosulfate (PAPS) using thioredoxin as an electron donor. This Escherichia coli O8 (strain IAI1) protein is Phosphoadenosine 5'-phosphosulfate reductase.